Reading from the N-terminus, the 37-residue chain is Large ribosomal subunit protein bL36c (37 aa).

It belongs to the bacterial ribosomal protein bL36 family.

The protein localises to the plastid. Its subcellular location is the chloroplast. In Anthoceros angustus (Hornwort), this protein is Large ribosomal subunit protein bL36c (rpl36).